Reading from the N-terminus, the 275-residue chain is Lectin (275 aa).

The signal sequence occupies residues 1-30 (MASLQTQMISFYLIFLSILLTTIFFFKVNS). Asp111 and Gly129 together coordinate D-glucose. Mn(2+)-binding residues include Glu149 and Asp151. 4 residues coordinate Ca(2+): Asp151, Phe153, Asn155, and Asp159. 2 residues coordinate Mn(2+): Asp159 and His166. The propeptide occupies 211 to 217 (NSLEEEN). The D-glucose site is built by Gly246 and Ala247. Positions 270–275 (KQAADA) are excised as a propeptide.

The protein belongs to the leguminous lectin family. In terms of assembly, heterotetramer of two alpha and two beta chains. In terms of processing, the mature form consists of two chains, alpha and beta, produced by cleavage of the immature protein. These remain cleaved, yet fold together to form one subunit.

Its function is as follows. D-mannose specific lectin. This Lens culinaris subsp. orientalis (Oriental wild lentil) protein is Lectin.